The sequence spans 359 residues: 3-dehydroquinate synthase (359 aa).

Residues Asp-71–Lys-76, Gly-105–Asp-109, Thr-129–Thr-130, Lys-142, Lys-151, and Cys-169–Thr-172 each bind NAD(+). Residues Glu-184, His-247, and His-264 each contribute to the Zn(2+) site.

The protein belongs to the sugar phosphate cyclases superfamily. Dehydroquinate synthase family. Requires Co(2+) as cofactor. The cofactor is Zn(2+). NAD(+) is required as a cofactor.

It localises to the cytoplasm. The enzyme catalyses 7-phospho-2-dehydro-3-deoxy-D-arabino-heptonate = 3-dehydroquinate + phosphate. The protein operates within metabolic intermediate biosynthesis; chorismate biosynthesis; chorismate from D-erythrose 4-phosphate and phosphoenolpyruvate: step 2/7. In terms of biological role, catalyzes the conversion of 3-deoxy-D-arabino-heptulosonate 7-phosphate (DAHP) to dehydroquinate (DHQ). This Shewanella halifaxensis (strain HAW-EB4) protein is 3-dehydroquinate synthase.